The following is a 275-amino-acid chain: Provicilin (275 aa).

Over residues 1–17 (DNAEIEKILLEEHEKET) the composition is skewed to basic and acidic residues. Disordered regions lie at residues 1 to 71 (DNAE…LKSS) and 134 to 164 (LVGQ…KNQV). Low complexity predominate over residues 50–63 (NAKSSSKKSVSSRS). The Cupin type-1 domain occupies 66-238 (FNLKSSDPIY…TFPGSAQEVD (173 aa)). Acidic residues predominate over residues 147–157 (EEDDEEEEQRE).

The protein belongs to the 7S seed storage protein family.

It localises to the vacuole. The protein resides in the aleurone grain. In terms of biological role, seed storage protein. This Pisum sativum (Garden pea) protein is Provicilin.